The chain runs to 194 residues: Large ribosomal subunit protein eL15 (194 aa).

Residues 164–194 (SAGKKGRGLRNKGIGAEKVRPSIRAHGRRGK) are disordered. The span at 184 to 194 (PSIRAHGRRGK) shows a compositional bias: basic residues.

This sequence belongs to the eukaryotic ribosomal protein eL15 family.

The chain is Large ribosomal subunit protein eL15 (rpl15e) from Methanocaldococcus jannaschii (strain ATCC 43067 / DSM 2661 / JAL-1 / JCM 10045 / NBRC 100440) (Methanococcus jannaschii).